A 195-amino-acid chain; its full sequence is U8 snoRNA-decapping enzyme (195 aa).

A Nudix hydrolase domain is found at 18–173 (DWRHACHALL…IGAAREQLLE (156 aa)). The substrate site is built by His24, Arg50, and Phe57. Gly59, Glu76, Glu80, and His99 together coordinate Mn(2+). The Nudix box signature appears at 61–82 (FVDAQDSCLEDGLNRELREELG). Gln170 contacts substrate. Glu173 contacts Mn(2+).

Belongs to the Nudix hydrolase family. NUDT16 subfamily. As to quaternary structure, homodimer. The cofactor is Mg(2+). Mn(2+) is required as a cofactor. It depends on Co(2+) as a cofactor. As to expression, expressed in brain, testis, spleen, lung, heart, liver, kidney and muscle (at protein level).

Its subcellular location is the nucleus. The protein localises to the nucleolus. The protein resides in the nucleoplasm. It is found in the cytoplasm. It carries out the reaction a 5'-end (N(7)-methyl 5'-triphosphoguanosine)-ribonucleoside in mRNA + H2O = N(7)-methyl-GDP + a 5'-end phospho-ribonucleoside in mRNA + 2 H(+). The enzyme catalyses IDP + H2O = IMP + phosphate + H(+). It catalyses the reaction dIDP + H2O = dIMP + phosphate + H(+). The catalysed reaction is a 5'-end NAD(+)-phospho-ribonucleoside in mRNA + H2O = a 5'-end phospho-ribonucleoside in mRNA + NAD(+) + H(+). It carries out the reaction a 5'-end FAD-phospho-ribonucleoside in mRNA + H2O = a 5'-end phospho-adenosine-phospho-ribonucleoside in mRNA + FMN + 2 H(+). The enzyme catalyses a 5'-end CoA-ribonucleoside in mRNA + H2O = a 5'-end phospho-adenosine-phospho-ribonucleoside in mRNA + (R)-4'-phosphopantetheine + 2 H(+). RNA-binding and decapping enzyme that catalyzes the cleavage of the cap structure of snoRNAs and mRNAs in a metal-dependent manner. Part of the U8 snoRNP complex that is required for the accumulation of mature 5.8S and 28S rRNA. Has diphosphatase activity and removes m7G and/or m227G caps from U8 snoRNA and leaves a 5'monophosphate on the RNA. Also catalyzes the cleavage of the cap structure on mRNAs. Does not hydrolyze cap analog structures like 7-methylguanosine nucleoside triphosphate (m7GpppG). Also hydrolysis m7G- and m227G U3-capped RNAs but with less efficiencies. Has broad substrate specificity with manganese or cobalt as cofactor and can act on various RNA species. Binds to the U8 snoRNA; metal is not required for RNA-binding. May play a role in the regulation of snoRNAs and mRNAs degradation. Also acts as a phosphatase; hydrolyzes the non-canonical purine nucleotides inosine diphosphate (IDP) and deoxyinosine diphosphate (dITP) as well as guanosine diphosphate (GDP), deoxyguanosine diphosphate (dGDP), xanthine diphosphate (XDP), inosine triphosphate (ITP) and deoxyinosine triphosphate (ITP) to their respective monophosphate derivatives and does not distinguish between the deoxy- and ribose forms. The order of activity with different substrates is IDP &gt; dIDP &gt;&gt; GDP = dGDP &gt; XDP = ITP = dITP. Binds strongly to GTP, ITP and XTP. Participates in the hydrolysis of dIDP/IDP and probably excludes non-canonical purines from RNA and DNA precursor pools, thus preventing their incorporation into RNA and DNA and avoiding chromosomal lesions. Exhibits decapping activity towards NAD-capped RNAs and FAD-capped RNAs. Exhibits decapping activity towards dpCoA-capped RNAs in vitro. This Mus musculus (Mouse) protein is U8 snoRNA-decapping enzyme (Nudt16).